The chain runs to 335 residues: Anthranilate phosphoribosyltransferase (335 aa).

5-phospho-alpha-D-ribose 1-diphosphate is bound by residues G79, 82–83 (GD), T87, 89–92 (NVST), 107–115 (KHCNKGVSS), and S119. G79 is an anthranilate binding site. S91 contributes to the Mg(2+) binding site. N110 is an anthranilate binding site. Anthranilate is bound at residue R165. Residues D223 and E224 each contribute to the Mg(2+) site.

The protein belongs to the anthranilate phosphoribosyltransferase family. As to quaternary structure, homodimer. Mg(2+) serves as cofactor.

The enzyme catalyses N-(5-phospho-beta-D-ribosyl)anthranilate + diphosphate = 5-phospho-alpha-D-ribose 1-diphosphate + anthranilate. Its pathway is amino-acid biosynthesis; L-tryptophan biosynthesis; L-tryptophan from chorismate: step 2/5. Catalyzes the transfer of the phosphoribosyl group of 5-phosphorylribose-1-pyrophosphate (PRPP) to anthranilate to yield N-(5'-phosphoribosyl)-anthranilate (PRA). This Buchnera aphidicola subsp. Schizaphis graminum (strain Sg) protein is Anthranilate phosphoribosyltransferase.